Here is a 355-residue protein sequence, read N- to C-terminus: UDP-3-O-acylglucosamine N-acyltransferase (355 aa).

Residue histidine 248 is the Proton acceptor of the active site.

Belongs to the transferase hexapeptide repeat family. LpxD subfamily. Homotrimer.

It catalyses the reaction a UDP-3-O-[(3R)-3-hydroxyacyl]-alpha-D-glucosamine + a (3R)-hydroxyacyl-[ACP] = a UDP-2-N,3-O-bis[(3R)-3-hydroxyacyl]-alpha-D-glucosamine + holo-[ACP] + H(+). It participates in bacterial outer membrane biogenesis; LPS lipid A biosynthesis. In terms of biological role, catalyzes the N-acylation of UDP-3-O-acylglucosamine using 3-hydroxyacyl-ACP as the acyl donor. Is involved in the biosynthesis of lipid A, a phosphorylated glycolipid that anchors the lipopolysaccharide to the outer membrane of the cell. In Syntrophobacter fumaroxidans (strain DSM 10017 / MPOB), this protein is UDP-3-O-acylglucosamine N-acyltransferase.